The following is a 187-amino-acid chain: Elongation factor P (187 aa).

The protein belongs to the elongation factor P family.

The protein resides in the cytoplasm. It participates in protein biosynthesis; polypeptide chain elongation. Functionally, involved in peptide bond synthesis. Stimulates efficient translation and peptide-bond synthesis on native or reconstituted 70S ribosomes in vitro. Probably functions indirectly by altering the affinity of the ribosome for aminoacyl-tRNA, thus increasing their reactivity as acceptors for peptidyl transferase. The polypeptide is Elongation factor P (Prochlorococcus marinus (strain NATL1A)).